The primary structure comprises 155 residues: Ribosomal RNA large subunit methyltransferase H (155 aa).

Residues Leu73, Gly104, and 123-128 (LSALTL) each bind S-adenosyl-L-methionine.

It belongs to the RNA methyltransferase RlmH family. As to quaternary structure, homodimer.

It is found in the cytoplasm. The catalysed reaction is pseudouridine(1915) in 23S rRNA + S-adenosyl-L-methionine = N(3)-methylpseudouridine(1915) in 23S rRNA + S-adenosyl-L-homocysteine + H(+). Its function is as follows. Specifically methylates the pseudouridine at position 1915 (m3Psi1915) in 23S rRNA. The protein is Ribosomal RNA large subunit methyltransferase H of Coxiella burnetii (strain Dugway 5J108-111).